A 167-amino-acid chain; its full sequence is Ureidoglycolate lyase (167 aa).

This sequence belongs to the ureidoglycolate lyase family. Homodimer. It depends on Ni(2+) as a cofactor.

The catalysed reaction is (S)-ureidoglycolate = urea + glyoxylate. The protein operates within nitrogen metabolism; (S)-allantoin degradation. Functionally, catalyzes the catabolism of the allantoin degradation intermediate (S)-ureidoglycolate, generating urea and glyoxylate. Involved in the utilization of allantoin as nitrogen source. In Pseudomonas putida (strain ATCC 700007 / DSM 6899 / JCM 31910 / BCRC 17059 / LMG 24140 / F1), this protein is Ureidoglycolate lyase.